The sequence spans 274 residues: Nitrogenase iron protein (274 aa).

8–15 serves as a coordination point for ATP; it reads GKGGIGKS. Residue Cys94 coordinates [4Fe-4S] cluster. Arg97 bears the ADP-ribosylarginine; by dinitrogenase reductase ADP-ribosyltransferase mark. Cys131 lines the [4Fe-4S] cluster pocket.

It belongs to the NifH/BchL/ChlL family. In terms of assembly, homodimer. It depends on [4Fe-4S] cluster as a cofactor. The reversible ADP-ribosylation of Arg-97 inactivates the nitrogenase reductase and regulates nitrogenase activity.

The catalysed reaction is N2 + 8 reduced [2Fe-2S]-[ferredoxin] + 16 ATP + 16 H2O = H2 + 8 oxidized [2Fe-2S]-[ferredoxin] + 2 NH4(+) + 16 ADP + 16 phosphate + 6 H(+). Its function is as follows. The key enzymatic reactions in nitrogen fixation are catalyzed by the nitrogenase complex, which has 2 components: the iron protein and the molybdenum-iron protein. The sequence is that of Nitrogenase iron protein from Chlorobaculum parvum (strain DSM 263 / NCIMB 8327) (Chlorobium vibrioforme subsp. thiosulfatophilum).